The primary structure comprises 366 residues: Histidinol-phosphate aminotransferase (366 aa).

Position 228 is an N6-(pyridoxal phosphate)lysine (K228).

It belongs to the class-II pyridoxal-phosphate-dependent aminotransferase family. Histidinol-phosphate aminotransferase subfamily. In terms of assembly, homodimer. Pyridoxal 5'-phosphate serves as cofactor.

The enzyme catalyses L-histidinol phosphate + 2-oxoglutarate = 3-(imidazol-4-yl)-2-oxopropyl phosphate + L-glutamate. The protein operates within amino-acid biosynthesis; L-histidine biosynthesis; L-histidine from 5-phospho-alpha-D-ribose 1-diphosphate: step 7/9. The polypeptide is Histidinol-phosphate aminotransferase (Stutzerimonas stutzeri (Pseudomonas stutzeri)).